A 701-amino-acid chain; its full sequence is Polyribonucleotide nucleotidyltransferase (701 aa).

Mg(2+) is bound by residues Asp487 and Asp493. Residues 554–613 (PTMIAMKIDTDKIRDVIGKGGATIRAICEETKASIDIEDDGSIKIFGESKEAAEAARQRV) form the KH domain. The 69-residue stretch at 623–691 (GKIYIGKVER…NRGRIKLSIK (69 aa)) folds into the S1 motif domain.

It belongs to the polyribonucleotide nucleotidyltransferase family. As to quaternary structure, component of the RNA degradosome, which is a multiprotein complex involved in RNA processing and mRNA degradation. It depends on Mg(2+) as a cofactor.

It localises to the cytoplasm. It catalyses the reaction RNA(n+1) + phosphate = RNA(n) + a ribonucleoside 5'-diphosphate. Involved in mRNA degradation. Catalyzes the phosphorolysis of single-stranded polyribonucleotides processively in the 3'- to 5'-direction. This Pseudomonas syringae pv. syringae (strain B728a) protein is Polyribonucleotide nucleotidyltransferase.